A 121-amino-acid chain; its full sequence is MVRATGSVASRRRRKRVLKQAKGFWGDRKGHFRQSRSSVMRAMAFNYMHRKDRKGDFRSLWIARLNVASRINGLSYSRLINGLKCAGIDLNRKMLSEMAIHNPMGFAEVANQAKKALEATI.

Belongs to the bacterial ribosomal protein bL20 family.

Binds directly to 23S ribosomal RNA and is necessary for the in vitro assembly process of the 50S ribosomal subunit. It is not involved in the protein synthesizing functions of that subunit. This chain is Large ribosomal subunit protein bL20, found in Chlamydia caviae (strain ATCC VR-813 / DSM 19441 / 03DC25 / GPIC) (Chlamydophila caviae).